The primary structure comprises 568 residues: Potassium-transporting ATPase potassium-binding subunit (568 aa).

A run of 12 helical transmembrane segments spans residues 7–27 (LLIT…GNII), 67–87 (YALA…TLLV), 137–157 (GLTV…FALI), 180–200 (LYLL…QGVI), 258–278 (FIQI…FGQV), 288–308 (LLWA…YAEL), 332–352 (FGIL…CGAV), 361–381 (ALGG…FGGV), 384–404 (GLYG…LMIG), 421–441 (MVAL…ALTI), 488–508 (LLLA…VLAI), and 535–555 (LLIL…LILG).

Belongs to the KdpA family. The system is composed of three essential subunits: KdpA, KdpB and KdpC.

The protein resides in the cell inner membrane. Its function is as follows. Part of the high-affinity ATP-driven potassium transport (or Kdp) system, which catalyzes the hydrolysis of ATP coupled with the electrogenic transport of potassium into the cytoplasm. This subunit binds the periplasmic potassium ions and delivers the ions to the membrane domain of KdpB through an intramembrane tunnel. This is Potassium-transporting ATPase potassium-binding subunit from Photorhabdus laumondii subsp. laumondii (strain DSM 15139 / CIP 105565 / TT01) (Photorhabdus luminescens subsp. laumondii).